A 488-amino-acid chain; its full sequence is MTTQSSSSSSSLPSSLSSTPPLLASNARCKVLRTGASSKGKGKGIKYPVDRISMLPDEMLQKILSTLSTKDAVITSTLSKRWVDQWKRIPHLCVDMRNIMRTNPTSYVHELSFRFAESMTKTLNNHRGHLESCTISHIQFIFLFIDRWIQTVTREKQTKEITLVNNIGCMTPFVRYNSLHLSPSAFCHPSLTSLSLTRYKLLEKAFKNCCNLKILKLYDIMSDVSVLSNVIKACSSLEVLVLQITFLNQASALKIENKKLEFLQVTWPCLMNRMEVNTPRLVIFDIKSIYCFGYSVEAPKLSMFKRDYWVGGMSYPHLSYHISSLAQEKIRIWLELMVSQIYHMKRTGSLSVSVDVRNPNEVEILKEVLLLWDGEMMDLEILFKNNNAPIEEGESFITGGARNKWWDGEKPFPDDFFRVCTVWMYNFDGSNEEEFALASRFVTQGTVTEKLMIKTSTYPPVKQLMTEAKVAKLMELPKGYEYLDIECF.

Positions 1–21 (MTTQSSSSSSSLPSSLSSTPP) are disordered. In terms of domain architecture, F-box spans 49–95 (VDRISMLPDEMLQKILSTLSTKDAVITSTLSKRWVDQWKRIPHLCVD).

This Arabidopsis thaliana (Mouse-ear cress) protein is F-box protein At3g60790.